Reading from the N-terminus, the 259-residue chain is ATP synthase subunit a 1 (259 aa).

The next 5 helical transmembrane spans lie at 30–50, 90–110, 135–155, 209–229, and 230–250; these read TLHV…LFFF, LIAP…AMDL, DLNA…FYSL, LIFI…SFPW, and AVFH…LTIV.

It belongs to the ATPase A chain family. F-type ATPases have 2 components, CF(1) - the catalytic core - and CF(0) - the membrane proton channel. CF(1) has five subunits: alpha(3), beta(3), gamma(1), delta(1), epsilon(1). CF(0) has three main subunits: a(1), b(2) and c(9-12). The alpha and beta chains form an alternating ring which encloses part of the gamma chain. CF(1) is attached to CF(0) by a central stalk formed by the gamma and epsilon chains, while a peripheral stalk is formed by the delta and b chains.

It localises to the cell inner membrane. Key component of the proton channel; it plays a direct role in the translocation of protons across the membrane. The polypeptide is ATP synthase subunit a 1 (Methylococcus capsulatus (strain ATCC 33009 / NCIMB 11132 / Bath)).